Here is a 199-residue protein sequence, read N- to C-terminus: NADH-quinone oxidoreductase subunit C (199 aa).

It belongs to the complex I 30 kDa subunit family. As to quaternary structure, NDH-1 is composed of 14 different subunits. Subunits NuoB, C, D, E, F, and G constitute the peripheral sector of the complex.

Its subcellular location is the cell inner membrane. The catalysed reaction is a quinone + NADH + 5 H(+)(in) = a quinol + NAD(+) + 4 H(+)(out). In terms of biological role, NDH-1 shuttles electrons from NADH, via FMN and iron-sulfur (Fe-S) centers, to quinones in the respiratory chain. The immediate electron acceptor for the enzyme in this species is believed to be ubiquinone. Couples the redox reaction to proton translocation (for every two electrons transferred, four hydrogen ions are translocated across the cytoplasmic membrane), and thus conserves the redox energy in a proton gradient. The chain is NADH-quinone oxidoreductase subunit C from Paramagnetospirillum magneticum (strain ATCC 700264 / AMB-1) (Magnetospirillum magneticum).